Here is a 447-residue protein sequence, read N- to C-terminus: Alpha-1,3-mannosyl-glycoprotein 2-beta-N-acetylglucosaminyltransferase (447 aa).

Residues 1-6 lie on the Cytoplasmic side of the membrane; the sequence is MLKKQS. The chain crosses the membrane as a helical; Signal-anchor for type II membrane protein span at residues 7-29; sequence AGLVLWGAIIFVGWNALLLLFFW. At 30-447 the chain is on the lumenal side; the sequence is TRPAPGRLPS…TWNGYDPSWN (418 aa). Cys-115 and Cys-145 form a disulfide bridge. The substrate site is built by Arg-117, Asp-144, His-190, and Asp-212. Asp-213 is a Mn(2+) binding site. A disulfide bridge connects residues Cys-239 and Cys-305. Residue Asp-291 is the Proton acceptor of the active site. Ser-322 lines the substrate pocket.

Belongs to the glycosyltransferase 13 family. In terms of assembly, interacts with MGAT4D. Interacts with BRI3. The cofactor is Mn(2+). Appears to be present in all tissues.

Its subcellular location is the golgi apparatus membrane. The protein resides in the cytoplasm. It localises to the perinuclear region. It catalyses the reaction N(4)-(alpha-D-Man-(1-&gt;3)-[alpha-D-Man-(1-&gt;3)-[alpha-D-Man-(1-&gt;6)]-alpha-D-Man-(1-&gt;6)]-beta-D-Man-(1-&gt;4)-beta-D-GlcNAc-(1-&gt;4)-beta-D-GlcNAc)-L-asparaginyl-[protein] (N-glucan mannose isomer 5A1,2) + UDP-N-acetyl-alpha-D-glucosamine = N(4)-{beta-D-GlcNAc-(1-&gt;2)-alpha-D-Man-(1-&gt;3)-[alpha-D-Man-(1-&gt;3)-[alpha-D-Man-(1-&gt;6)]-alpha-D-Man-(1-&gt;6)]-beta-D-Man-(1-&gt;4)-beta-D-GlcNAc-(1-&gt;4)-beta-D-GlcNAc}-L-asparaginyl-[protein] + UDP + H(+). Its pathway is protein modification; protein glycosylation. In terms of biological role, initiates complex N-linked carbohydrate formation. Essential for the conversion of high-mannose to hybrid and complex N-glycans. This Rattus norvegicus (Rat) protein is Alpha-1,3-mannosyl-glycoprotein 2-beta-N-acetylglucosaminyltransferase (Mgat1).